The following is a 379-amino-acid chain: Protein COS4 (379 aa).

4 helical membrane-spanning segments follow: residues 43 to 63 (IYKSLAFRIWMLLWLPLSVWW), 70 to 90 (IYPLMVSLLVLFWGPVFVLVI), 233 to 253 (ISNIFMLIPFLNFLCCIYVSR), and 255 to 275 (MCLLLRTLYLGWILFMLVQGF).

It belongs to the DUP/COS family.

It localises to the membrane. This is Protein COS4 (COS4) from Saccharomyces cerevisiae (strain ATCC 204508 / S288c) (Baker's yeast).